The following is a 338-amino-acid chain: NADPH dehydrogenase (338 aa).

Residue serine 22–cysteine 25 participates in FMN binding. Substrate is bound at residue tyrosine 27. Residues alanine 59 and glutamine 101 each coordinate FMN. Residue histidine 163 to histidine 166 coordinates substrate. FMN-binding positions include arginine 214 and glycine 306–arginine 307.

This sequence belongs to the NADH:flavin oxidoreductase/NADH oxidase family. NamA subfamily. In terms of assembly, homotetramer. FMN serves as cofactor.

It carries out the reaction A + NADPH + H(+) = AH2 + NADP(+). Functionally, catalyzes the reduction of the double bond of an array of alpha,beta-unsaturated aldehydes and ketones. It also reduces the nitro group of nitroester and nitroaromatic compounds. It could have a role in detoxification processes. This is NADPH dehydrogenase from Listeria monocytogenes serotype 4a (strain HCC23).